The primary structure comprises 284 residues: Isopentenyl-diphosphate Delta-isomerase II, chloroplastic (284 aa).

The N-terminal 45 residues, 1–45 (MSASSLFNLPLIRLRSLALSSSFSSFRFAHRPLSSISPRKLPNFR), are a transit peptide targeting the chloroplast. Position 46 is an N-acetylalanine (alanine 46). Substrate is bound at residue lysine 88. Mg(2+) contacts are provided by histidine 92 and histidine 104. The region spanning 102-254 (LLHRAFSVFL…GLKLSPWFRL (153 aa)) is the Nudix hydrolase domain. Arginine 123 and lysine 127 together coordinate substrate. Residue cysteine 139 is part of the active site. Serine 140 contacts substrate. The Nudix box motif lies at 140-170 (SHPLYRESELIQDNALGVRNAAQRKLLDELG). Glutamate 199 and glutamate 201 together coordinate Mg(2+). Glutamate 201 is a catalytic residue.

This sequence belongs to the IPP isomerase type 1 family. Mg(2+) serves as cofactor.

It localises to the plastid. The protein resides in the chloroplast. The enzyme catalyses isopentenyl diphosphate = dimethylallyl diphosphate. It functions in the pathway isoprenoid biosynthesis; dimethylallyl diphosphate biosynthesis; dimethylallyl diphosphate from isopentenyl diphosphate: step 1/1. It participates in porphyrin-containing compound metabolism; chlorophyll biosynthesis. In terms of biological role, catalyzes the 1,3-allylic rearrangement of the homoallylic substrate isopentenyl (IPP) to its highly electrophilic allylic isomer, dimethylallyl diphosphate (DMAPP). The protein is Isopentenyl-diphosphate Delta-isomerase II, chloroplastic (IPP2) of Arabidopsis thaliana (Mouse-ear cress).